The primary structure comprises 951 residues: Kinase suppressor of Ras 2 (951 aa).

Positions 237–298 (PPPPPLESGH…PGTPPPSSRK (62 aa)) are disordered. Positions 260–274 (RTPPRTPNIVTTVTP) are enriched in low complexity. Thr-273 and Thr-277 each carry phosphothreonine. Residues 413–457 (KHRFSTKYWMSQTCTVCGKGMLFGLKCKNCKLKCHNKCTKEAPPC) form a Phorbol-ester/DAG-type zinc finger. Positions 414, 426, 429, 439, 442, 447, 450, and 457 each coordinate Zn(2+). Phosphoserine; by MARK3 is present on Ser-475. 2 disordered regions span residues 489–559 (RYSD…QKKN) and 614–634 (EPTSENEESHNEAEESEDEFE). Positions 494-503 (HISQTLPKTN) are enriched in polar residues. Thr-498 carries the phosphothreonine modification. Residues 518-531 (SSSNPSSTTSSTPS) are compositionally biased toward low complexity. Pro residues predominate over residues 532–552 (SPAPPLPPSATPPSPLHPSPQ). In terms of domain architecture, Protein kinase spans 667–932 (LEIGELIGKG…TKLMDMLEKL (266 aa)). 673 to 681 (IGKGRFGQV) serves as a coordination point for ATP. The active-site Proton donor/acceptor is Asp-787. ATP-binding residues include Lys-789 and Asp-804.

It belongs to the protein kinase superfamily. TKL Ser/Thr protein kinase family. As to quaternary structure, heterodimerizes (via N-terminus) with BRAF (via N-terminus) in a MAP2K1/MEK1-dependent manner. Interacts with BRAF; this increases the low intrinsic protein kinase activity of KSR2. Interacts with MAP2K1, forming a heterodimer that can dimerize to form a heterotetramer. Interacts with MAP3K8, MAPK, RAS and RAF. Post-translationally, phosphorylated on Ser-475 by MARK3.

Its subcellular location is the cytoplasm. The protein resides in the membrane. It carries out the reaction L-seryl-[protein] + ATP = O-phospho-L-seryl-[protein] + ADP + H(+). It catalyses the reaction L-threonyl-[protein] + ATP = O-phospho-L-threonyl-[protein] + ADP + H(+). Its function is as follows. Location-regulated scaffold connecting MEK to RAF. Has very low protein kinase activity and can phosphorylate MAP2K1 at several Ser and Thr residues with very low efficiency (in vitro). Acts as MAP2K1/MEK1-dependent allosteric activator of BRAF; upon binding to MAP2K1/MEK1, dimerizes with BRAF and promotes BRAF-mediated phosphorylation of MAP2K1/MEK1. Interaction with BRAF enhances KSR2-mediated phosphorylation of MAP2K1 (in vitro). Blocks MAP3K8 kinase activity and MAP3K8-mediated signaling. Acts as a negative regulator of MAP3K3-mediated activation of ERK, JNK and NF-kappa-B pathways, inhibiting MAP3K3-mediated interleukin-8 production. The polypeptide is Kinase suppressor of Ras 2 (Mus musculus (Mouse)).